A 562-amino-acid polypeptide reads, in one-letter code: Glucose-6-phosphate isomerase (562 aa).

Glutamate 370 acts as the Proton donor in catalysis. Active-site residues include histidine 401 and lysine 526.

It belongs to the GPI family.

It is found in the cytoplasm. It catalyses the reaction alpha-D-glucose 6-phosphate = beta-D-fructose 6-phosphate. It functions in the pathway carbohydrate biosynthesis; gluconeogenesis. Its pathway is carbohydrate degradation; glycolysis; D-glyceraldehyde 3-phosphate and glycerone phosphate from D-glucose: step 2/4. Catalyzes the reversible isomerization of glucose-6-phosphate to fructose-6-phosphate. This Deinococcus geothermalis (strain DSM 11300 / CIP 105573 / AG-3a) protein is Glucose-6-phosphate isomerase.